The sequence spans 140 residues: MQKKSSSKSHRATRGPSQRQLRAGELIRRALSDVVTRGTIQDPDLIERSFSVTEVRVSPDLRHATCFVAPLGKGDAAALAAALTRVRGYLRGQLSKEVTFKYMPDLTFEPDTSFDKAEQIDRLLHSPKVSQDLSPQDDEE.

Basic residues predominate over residues 1-13; the sequence is MQKKSSSKSHRAT. Residues 1–22 are disordered; it reads MQKKSSSKSHRATRGPSQRQLR.

Belongs to the RbfA family. As to quaternary structure, monomer. Binds 30S ribosomal subunits, but not 50S ribosomal subunits or 70S ribosomes.

It is found in the cytoplasm. One of several proteins that assist in the late maturation steps of the functional core of the 30S ribosomal subunit. Associates with free 30S ribosomal subunits (but not with 30S subunits that are part of 70S ribosomes or polysomes). Required for efficient processing of 16S rRNA. May interact with the 5'-terminal helix region of 16S rRNA. The chain is Ribosome-binding factor A from Parvibaculum lavamentivorans (strain DS-1 / DSM 13023 / NCIMB 13966).